A 1173-amino-acid polypeptide reads, in one-letter code: 3-hydroxy-3-methylglutaryl coenzyme A reductase mlcD (1173 aa).

N143 and N186 each carry an N-linked (GlcNAc...) asparagine glycan. One can recognise an SSD domain in the interval 241–420 (DVVVMVLGYI…FTFYTAILSI (180 aa)). The next 7 membrane-spanning stretches (helical) occupy residues 242–262 (VVVMVLGYISMHLTFVSLFLS), 272–292 (LATSVLLSSTFAFLLGLDVAI), 302–322 (LLSEGLPFLVVIVGFEKSITL), 368–388 (NIVCHYVVEILLLVIGAVLGI), 397–417 (VLAALILFFDCLLLFTFYTAI), 479–499 (FWMVVGFLIVNLVNIGSTLFQ), and 594–614 (VLSKWVFVALALSVALNSYLF). The tract at residues 498–673 (FQASSSGSLS…FTPTTTDSDS (176 aa)) is linker. Over residues 647-666 (NQTPQIQSSLQAPQTRVFTP) the composition is skewed to polar residues. Positions 647 to 669 (NQTPQIQSSLQAPQTRVFTPTTT) are disordered. Residues 674 to 1133 (DASLVLIKAS…LVKAHMAHNR (460 aa)) form a catalytic region. E822 acts as the Charge relay system in catalysis. N886 carries N-linked (GlcNAc...) asparagine glycosylation. K956 functions as the Charge relay system in the catalytic mechanism. N997 carries N-linked (GlcNAc...) asparagine glycosylation. Catalysis depends on D1032, which acts as the Charge relay system. The active-site Proton donor is H1128. Residue N1132 is glycosylated (N-linked (GlcNAc...) asparagine). A disordered region spans residues 1132–1173 (NRSAPASSAPSRSVSPSGGTRTVPVPNNALRPSAAATDRARR). The segment covering 1133–1148 (RSAPASSAPSRSVSPS) has biased composition (low complexity).

The protein belongs to the HMG-CoA reductase family.

It is found in the endoplasmic reticulum membrane. The catalysed reaction is (R)-mevalonate + 2 NADP(+) + CoA = (3S)-3-hydroxy-3-methylglutaryl-CoA + 2 NADPH + 2 H(+). It functions in the pathway polyketide biosynthesis. HMG-CoA reductase; part of the gene cluster that mediates the biosynthesis of compactin, also known as mevastatin or ML-236B, and which acts as a potent competitive inhibitor of HMG-CoA reductase. Compactin biosynthesis is performed in two stages. The first stage is catalyzed by the nonaketide synthase mlcA, which belongs to type I polyketide synthases and catalyzes the iterative nine-step formation of the polyketide. This PKS stage is completed by the action of dehydrogenase mlcG, which catalyzes the NADPH-dependent reduction of the unsaturated tetra-, penta- and heptaketide intermediates that arise during the mlcA-mediated biosynthesis of the nonaketide chain and leads to dihydro-ML-236C carboxylate. Covalently bound dihydro-ML-236C carboxylate is released from mlcA by the mlcF esterase. Conversion of dihydro-ML-236C carboxylate into ML-236A carboxylate is subsequently performed with the participation of molecular oxygen and P450 monoogygenase mlcC. Finally, mlcH performs the conversion of ML-236A carboxylate to ML-236B/compactin carboxylate through the addition of the side-chain diketide moiety produced by the diketide synthase mlcB. HMG-CoA reductase mlcD may act as a down-regulator of compactin production and is involved in conferring resistance to ML-236B/compactin. This chain is 3-hydroxy-3-methylglutaryl coenzyme A reductase mlcD, found in Penicillium citrinum.